Here is a 190-residue protein sequence, read N- to C-terminus: Acireductone dioxygenase (190 aa).

Positions 101, 103, 107, and 145 each coordinate Fe(2+). Ni(2+) contacts are provided by H101, H103, E107, and H145.

This sequence belongs to the acireductone dioxygenase (ARD) family. In terms of assembly, monomer. Requires Fe(2+) as cofactor. It depends on Ni(2+) as a cofactor.

It carries out the reaction 1,2-dihydroxy-5-(methylsulfanyl)pent-1-en-3-one + O2 = 3-(methylsulfanyl)propanoate + CO + formate + 2 H(+). The enzyme catalyses 1,2-dihydroxy-5-(methylsulfanyl)pent-1-en-3-one + O2 = 4-methylsulfanyl-2-oxobutanoate + formate + 2 H(+). It functions in the pathway amino-acid biosynthesis; L-methionine biosynthesis via salvage pathway; L-methionine from S-methyl-5-thio-alpha-D-ribose 1-phosphate: step 5/6. In terms of biological role, catalyzes 2 different reactions between oxygen and the acireductone 1,2-dihydroxy-3-keto-5-methylthiopentene (DHK-MTPene) depending upon the metal bound in the active site. Fe-containing acireductone dioxygenase (Fe-ARD) produces formate and 2-keto-4-methylthiobutyrate (KMTB), the alpha-ketoacid precursor of methionine in the methionine recycle pathway. Ni-containing acireductone dioxygenase (Ni-ARD) produces methylthiopropionate, carbon monoxide and formate, and does not lie on the methionine recycle pathway. This Saccharopolyspora erythraea (strain ATCC 11635 / DSM 40517 / JCM 4748 / NBRC 13426 / NCIMB 8594 / NRRL 2338) protein is Acireductone dioxygenase.